The chain runs to 158 residues: 6,7-dimethyl-8-ribityllumazine synthase (158 aa).

Residues Phe-22, 57–59, and 81–83 contribute to the 5-amino-6-(D-ribitylamino)uracil site; these read AVE and AVI. 86-87 contributes to the (2S)-2-hydroxy-3-oxobutyl phosphate binding site; the sequence is GT. The Proton donor role is filled by His-89. Phe-114 contributes to the 5-amino-6-(D-ribitylamino)uracil binding site. Arg-128 serves as a coordination point for (2S)-2-hydroxy-3-oxobutyl phosphate.

It belongs to the DMRL synthase family. Forms an icosahedral capsid composed of 60 subunits, arranged as a dodecamer of pentamers.

The catalysed reaction is (2S)-2-hydroxy-3-oxobutyl phosphate + 5-amino-6-(D-ribitylamino)uracil = 6,7-dimethyl-8-(1-D-ribityl)lumazine + phosphate + 2 H2O + H(+). It functions in the pathway cofactor biosynthesis; riboflavin biosynthesis; riboflavin from 2-hydroxy-3-oxobutyl phosphate and 5-amino-6-(D-ribitylamino)uracil: step 1/2. In terms of biological role, catalyzes the formation of 6,7-dimethyl-8-ribityllumazine by condensation of 5-amino-6-(D-ribitylamino)uracil with 3,4-dihydroxy-2-butanone 4-phosphate. This is the penultimate step in the biosynthesis of riboflavin. This chain is 6,7-dimethyl-8-ribityllumazine synthase, found in Shewanella pealeana (strain ATCC 700345 / ANG-SQ1).